We begin with the raw amino-acid sequence, 677 residues long: O-fucosyltransferase 27 (677 aa).

Residues Trp-15 to Ala-35 form a helical; Signal-anchor for type II membrane protein membrane-spanning segment. A glycan (N-linked (GlcNAc...) asparagine) is linked at Asn-130. The tract at residues Pro-410 to Ala-437 is disordered. Residues Asn-542 and Asn-592 are each glycosylated (N-linked (GlcNAc...) asparagine). A disordered region spans residues Asn-619–Arg-677. Residues Lys-622–Leu-631 show a composition bias toward acidic residues. Positions Gly-644–Ala-658 are enriched in low complexity. Residue Asn-651 is glycosylated (N-linked (GlcNAc...) asparagine). The segment covering Gln-665–Arg-677 has biased composition (acidic residues).

It belongs to the glycosyltransferase GT106 family.

The protein resides in the membrane. It functions in the pathway glycan metabolism. The protein is O-fucosyltransferase 27 of Arabidopsis thaliana (Mouse-ear cress).